The chain runs to 105 residues: uncharacterized protein (105 aa).

The chain crosses the membrane as a helical span at residues 25-47 (AHSVTLLFGIFRSSPFLLLFLLI). A disordered region spans residues 54-89 (GRGSQRMKKKRGRANPSENLRERADPTNGPAENGKK).

Its subcellular location is the membrane. This is an uncharacterized protein from Saccharomyces cerevisiae (strain ATCC 204508 / S288c) (Baker's yeast).